The sequence spans 215 residues: UPF0056 membrane protein bbp_248 (215 aa).

6 helical membrane-spanning segments follow: residues 10–32 (IYIS…PIFT), 52–74 (FSVA…LFGI), 78–100 (SFRI…GNFI), 119–141 (ISIV…TIVW), 151–169 (IFGC…WTLF), and 190–207 (IMGL…LAGL).

It belongs to the UPF0056 (MarC) family.

The protein localises to the cell membrane. This is UPF0056 membrane protein bbp_248 from Buchnera aphidicola subsp. Baizongia pistaciae (strain Bp).